The primary structure comprises 303 residues: UDP-3-O-acyl-N-acetylglucosamine deacetylase (303 aa).

Positions 79, 238, and 242 each coordinate Zn(2+). Residue His-265 is the Proton donor of the active site.

The protein belongs to the LpxC family. Zn(2+) serves as cofactor.

The catalysed reaction is a UDP-3-O-[(3R)-3-hydroxyacyl]-N-acetyl-alpha-D-glucosamine + H2O = a UDP-3-O-[(3R)-3-hydroxyacyl]-alpha-D-glucosamine + acetate. Its pathway is glycolipid biosynthesis; lipid IV(A) biosynthesis; lipid IV(A) from (3R)-3-hydroxytetradecanoyl-[acyl-carrier-protein] and UDP-N-acetyl-alpha-D-glucosamine: step 2/6. In terms of biological role, catalyzes the hydrolysis of UDP-3-O-myristoyl-N-acetylglucosamine to form UDP-3-O-myristoylglucosamine and acetate, the committed step in lipid A biosynthesis. In Pseudoalteromonas translucida (strain TAC 125), this protein is UDP-3-O-acyl-N-acetylglucosamine deacetylase.